Here is a 429-residue protein sequence, read N- to C-terminus: Adenylosuccinate synthetase (429 aa).

Residues 12-18 (GDEGKGK) and 40-42 (GHT) contribute to the GTP site. Asp13 (proton acceptor) is an active-site residue. Asp13 and Gly40 together coordinate Mg(2+). Residues 13–16 (DEGK), 38–41 (NAGH), Thr128, Arg142, Gln223, Thr238, and Arg302 contribute to the IMP site. The Proton donor role is filled by His41. A substrate-binding site is contributed by 298–304 (VNTGRPR). GTP-binding positions include Arg304, 330 to 332 (KLD), and 412 to 414 (GVG).

Belongs to the adenylosuccinate synthetase family. Homodimer. Requires Mg(2+) as cofactor.

The protein resides in the cytoplasm. The enzyme catalyses IMP + L-aspartate + GTP = N(6)-(1,2-dicarboxyethyl)-AMP + GDP + phosphate + 2 H(+). Its pathway is purine metabolism; AMP biosynthesis via de novo pathway; AMP from IMP: step 1/2. Functionally, plays an important role in the de novo pathway of purine nucleotide biosynthesis. Catalyzes the first committed step in the biosynthesis of AMP from IMP. The protein is Adenylosuccinate synthetase of Corynebacterium urealyticum (strain ATCC 43042 / DSM 7109).